A 235-amino-acid chain; its full sequence is Aspartate/glutamate leucyltransferase (235 aa).

The protein belongs to the R-transferase family. Bpt subfamily.

It is found in the cytoplasm. The enzyme catalyses N-terminal L-glutamyl-[protein] + L-leucyl-tRNA(Leu) = N-terminal L-leucyl-L-glutamyl-[protein] + tRNA(Leu) + H(+). The catalysed reaction is N-terminal L-aspartyl-[protein] + L-leucyl-tRNA(Leu) = N-terminal L-leucyl-L-aspartyl-[protein] + tRNA(Leu) + H(+). In terms of biological role, functions in the N-end rule pathway of protein degradation where it conjugates Leu from its aminoacyl-tRNA to the N-termini of proteins containing an N-terminal aspartate or glutamate. This is Aspartate/glutamate leucyltransferase from Pseudomonas fluorescens (strain ATCC BAA-477 / NRRL B-23932 / Pf-5).